Reading from the N-terminus, the 243-residue chain is Pyrimidodiazepine synthase (243 aa).

The 83-residue stretch at 20-102 (GILRLYSMRF…YLDEQYPLRP (83 aa)) folds into the GST N-terminal domain. Cysteine 30 serves as the catalytic Nucleophile. Residues lysine 57, valine 70, and 86–87 (ES) each bind glutathione. The GST C-terminal domain occupies 107-230 (DPLKKVQDKL…VQAEFLRTRS (124 aa)).

It belongs to the GST superfamily. Omega family. In terms of assembly, homodimer.

The catalysed reaction is 2-amino-6-acetyl-3,7,8,9-tetrahydro-3H-pyrimido[4,5-b][1,4]diazepin-4-one + glutathione disulfide + H2O = 6-pyruvoyl-5,6,7,8-tetrahydropterin + 2 glutathione. Mediates the conversion of 2-amino-4-oxo-6-pyruvoyl-5,6,7,8-tetrahydropteridine (6-PTP; also named 6-pyruvoyltetrahydropterin) to 2-amino-6-acetyl-3,7,8,9-tetrahydro-3H-pyrimido(4,5-b)[1,4]diazepin-4-one (pyrimidodiazepine or PDA), a key intermediate in red eye pigment drosopterin biosynthesis. This chain is Pyrimidodiazepine synthase, found in Drosophila melanogaster (Fruit fly).